A 278-amino-acid polypeptide reads, in one-letter code: Energy-coupling factor transporter ATP-binding protein EcfA1 (278 aa).

The region spanning 5 to 240 (IEVRNLKYKY…EDLEELGLDQ (236 aa)) is the ABC transporter domain. 40–47 (GHNGSGKS) is a binding site for ATP.

Belongs to the ABC transporter superfamily. Energy-coupling factor EcfA family. Forms a stable energy-coupling factor (ECF) transporter complex composed of 2 membrane-embedded substrate-binding proteins (S component), 2 ATP-binding proteins (A component) and 2 transmembrane proteins (T component).

Its subcellular location is the cell membrane. ATP-binding (A) component of a common energy-coupling factor (ECF) ABC-transporter complex. Unlike classic ABC transporters this ECF transporter provides the energy necessary to transport a number of different substrates. This Streptococcus sanguinis (strain SK36) protein is Energy-coupling factor transporter ATP-binding protein EcfA1.